The sequence spans 436 residues: MAFVDQATIEMKAGNGGDGIISFRHEKFVPLGGPFGGDGGKGGDIYFIVDEGLRTLMDFRYNRHFRAKHGEKGGTKGMTGASADDLYVKVPAGTIISNADTNQQIVDLTENGKKFLIAHGGRGGRGNMRFATPSNPAPEISENGEPGETLKVKLELRVLADVGLVGFPSAGKSTFLSVVTAARPKIAAYHFTTIDPNLGMVQLPDGRDFTIADLPGLIKGASKGVGLGFEFLRHVERTRVLLHMIDMSEESGLGIKPFEAYLQINQELKSYDPRLLDRPMIIVATKMDLPSSKANLEDFKQELANRQINMPIVEISSVTQTGTKQLLLKVADLLDKTPRMIERKEEQSTDDRLYEFKDDHQSTDFQIEHEGDDWIIVSERISKLAKMTNKTTDESLRRFARQLRSFGVDDKLREAGAKDGDMVYIDGADFAFEFEE.

Residues 1 to 159 (MAFVDQATIE…LKVKLELRVL (159 aa)) form the Obg domain. The region spanning 160–335 (ADVGLVGFPS…LLLKVADLLD (176 aa)) is the OBG-type G domain. GTP-binding positions include 166-173 (GFPSAGKS), 191-195 (FTTID), 213-216 (DLPG), 285-288 (TKMD), and 316-318 (SSV). Residues Ser173 and Thr193 each coordinate Mg(2+). The OCT domain maps to 357-436 (KDDHQSTDFQ…GADFAFEFEE (80 aa)).

Belongs to the TRAFAC class OBG-HflX-like GTPase superfamily. OBG GTPase family. As to quaternary structure, monomer. Mg(2+) serves as cofactor.

Its subcellular location is the cytoplasm. Functionally, an essential GTPase which binds GTP, GDP and possibly (p)ppGpp with moderate affinity, with high nucleotide exchange rates and a fairly low GTP hydrolysis rate. Plays a role in control of the cell cycle, stress response, ribosome biogenesis and in those bacteria that undergo differentiation, in morphogenesis control. The sequence is that of GTPase Obg from Oenococcus oeni (strain ATCC BAA-331 / PSU-1).